Reading from the N-terminus, the 505-residue chain is MTEQKYIVALDQGTTSSRAVVLDHDANIVSVSQREFTQIYPQAGWVEHDPMEIYATQSSTLVEALGKKGIRSDQVAAIGITNQRETTIVWNKETGKPVYNAIVWQCRRTADICEDLKARGLESYIRENTGLVLDPYFSGTKVKWILDNVEGAREDAEAGKLLFGTVDTWLVWKMTQGRVHVTDYTNASRTMLFNINDLCWDSKLLEEMGIPASMMPEVKRSSEIYGQTNIGGKGGTRIPISGIAGDQQAALYGQMCVEAGQAKNTYGTGCFLLMNTGQEKVTSRNGLLTTLACGPKGEPAYALEGAVFMGGASIQWLRDELKLISDAHDSEYFATKVDTSNGVYVVPAFTGLGAPYWDAYARGTIVGLTRGVNSNHIIRATLEGIAYQTRDVLDAMQADSGIKLSALRVDGGAVANNFLMQFQSDVLDTEVHRPKVTEVTALGAAYLAGLAVGYWNSIDELQGKAEIDRSFLPHQDEEKRSRRYKGWKRAVKCAQTWSELRDLED.

Residue T14 participates in ADP binding. T14, T15, and S16 together coordinate ATP. T14 is a binding site for sn-glycerol 3-phosphate. ADP is bound at residue R18. The sn-glycerol 3-phosphate site is built by R84, E85, Y136, and D246. Residues R84, E85, Y136, D246, and Q247 each contribute to the glycerol site. Positions 268 and 311 each coordinate ADP. ATP contacts are provided by T268, G311, Q315, and G412. ADP is bound by residues G412 and N416.

It belongs to the FGGY kinase family.

It carries out the reaction glycerol + ATP = sn-glycerol 3-phosphate + ADP + H(+). It functions in the pathway polyol metabolism; glycerol degradation via glycerol kinase pathway; sn-glycerol 3-phosphate from glycerol: step 1/1. Inhibited by fructose 1,6-bisphosphate (FBP). In terms of biological role, key enzyme in the regulation of glycerol uptake and metabolism. Catalyzes the phosphorylation of glycerol to yield sn-glycerol 3-phosphate. In Vibrio vulnificus (strain CMCP6), this protein is Glycerol kinase.